The primary structure comprises 108 residues: Large ribosomal subunit protein uL24 (108 aa).

This sequence belongs to the universal ribosomal protein uL24 family. Part of the 50S ribosomal subunit.

One of two assembly initiator proteins, it binds directly to the 5'-end of the 23S rRNA, where it nucleates assembly of the 50S subunit. Functionally, one of the proteins that surrounds the polypeptide exit tunnel on the outside of the subunit. In Mycoplasmopsis synoviae (strain 53) (Mycoplasma synoviae), this protein is Large ribosomal subunit protein uL24.